The following is a 397-amino-acid chain: Chalcone synthase 2 (397 aa).

Cysteine 168 is an active-site residue.

The protein belongs to the thiolase-like superfamily. Chalcone/stilbene synthases family.

The catalysed reaction is (E)-4-coumaroyl-CoA + 3 malonyl-CoA + 3 H(+) = 2',4,4',6'-tetrahydroxychalcone + 3 CO2 + 4 CoA. Its pathway is secondary metabolite biosynthesis; flavonoid biosynthesis. In terms of biological role, the primary product of this enzyme is 4,2',4',6'-tetrahydroxychalcone (also termed naringenin-chalcone or chalcone) which can under specific conditions spontaneously isomerize into naringenin. The chain is Chalcone synthase 2 (CHS2) from Daucus carota (Wild carrot).